Reading from the N-terminus, the 192-residue chain is Cytidylate kinase (192 aa).

12–20 (GLAGSGTTT) contacts ATP.

This sequence belongs to the cytidylate kinase family. Type 2 subfamily.

The protein localises to the cytoplasm. It carries out the reaction CMP + ATP = CDP + ADP. It catalyses the reaction dCMP + ATP = dCDP + ADP. The sequence is that of Cytidylate kinase from Pyrococcus furiosus (strain ATCC 43587 / DSM 3638 / JCM 8422 / Vc1).